We begin with the raw amino-acid sequence, 621 residues long: (-)-beta-phellandrene synthase 1, chloroplastic (621 aa).

The N-terminal 49 residues, 1–49 (MALALVSVAPLVSMRRSLFSSPYELKSIDKTIPNLVMCRKRMSGTPSIR), are a transit peptide targeting the chloroplast. Positions 372, 376, and 524 each coordinate Mg(2+). The DDXXD motif signature appears at 372-376 (DDIYD).

This sequence belongs to the terpene synthase family. Tpsd subfamily. Mg(2+) is required as a cofactor. Mn(2+) serves as cofactor.

The protein resides in the plastid. Its subcellular location is the chloroplast. The enzyme catalyses (2E)-geranyl diphosphate = (-)-beta-phellandrene + diphosphate. It functions in the pathway terpene metabolism; oleoresin biosynthesis. Its pathway is secondary metabolite biosynthesis; terpenoid biosynthesis. In terms of biological role, monoterpene synthase (TPS) involved in the biosynthesis of monoterpene natural products included in conifer oleoresin secretions and volatile emissions; these compounds contribute to biotic and abiotic stress defense against herbivores and pathogens. Catalyzes the conversion of (2E)-geranyl diphosphate (GPP) to (-)-beta-phellandrene and, to a lower extent, to (-)-alpha-phellandrene. The sequence is that of (-)-beta-phellandrene synthase 1, chloroplastic from Pinus contorta (Shore pine).